A 345-amino-acid chain; its full sequence is MTITVAVDAMGGDVGLKVTVPASIQFLQDHPDTHLILVGDQPALEAELALHDGAVRERILIQHATQVVGMDEAPQLALKNKKDSSMRVAINLVKEGKAQAAVSAGNTGALMATARFVLKTIPGIDRPAIAKLLPNVKGTSCVLDLGANVDCTPEQLLQFGIMGSELMACLQGKANPSVGLLNIGSEDIKGNDNIKKTAELLRQSELHFYGNVEGDDICKGTTDVVVCDGFTGNVALKTAEGLAHMFAVFLREEFGRSWWTRLCALAALPVLALFKKRIDPRRYNGASLLGLRGIVVKSHGSADVTGFRYALAQACEEAGSDVIAHIADRVAKQLDNLKQSEAEAN.

Belongs to the PlsX family. As to quaternary structure, homodimer. Probably interacts with PlsY.

The protein localises to the cytoplasm. The catalysed reaction is a fatty acyl-[ACP] + phosphate = an acyl phosphate + holo-[ACP]. The protein operates within lipid metabolism; phospholipid metabolism. Its function is as follows. Catalyzes the reversible formation of acyl-phosphate (acyl-PO(4)) from acyl-[acyl-carrier-protein] (acyl-ACP). This enzyme utilizes acyl-ACP as fatty acyl donor, but not acyl-CoA. The chain is Phosphate acyltransferase from Chromobacterium violaceum (strain ATCC 12472 / DSM 30191 / JCM 1249 / CCUG 213 / NBRC 12614 / NCIMB 9131 / NCTC 9757 / MK).